We begin with the raw amino-acid sequence, 291 residues long: Lipoyl synthase, mitochondrial (291 aa).

[4Fe-4S] cluster contacts are provided by cysteine 45, cysteine 50, cysteine 56, cysteine 71, cysteine 75, cysteine 78, and serine 283. The Radical SAM core domain maps to tryptophan 57–arginine 272.

Belongs to the radical SAM superfamily. Lipoyl synthase family. [4Fe-4S] cluster is required as a cofactor.

It localises to the mitochondrion. It catalyses the reaction [[Fe-S] cluster scaffold protein carrying a second [4Fe-4S](2+) cluster] + N(6)-octanoyl-L-lysyl-[protein] + 2 oxidized [2Fe-2S]-[ferredoxin] + 2 S-adenosyl-L-methionine + 4 H(+) = [[Fe-S] cluster scaffold protein] + N(6)-[(R)-dihydrolipoyl]-L-lysyl-[protein] + 4 Fe(3+) + 2 hydrogen sulfide + 2 5'-deoxyadenosine + 2 L-methionine + 2 reduced [2Fe-2S]-[ferredoxin]. Its pathway is protein modification; protein lipoylation via endogenous pathway; protein N(6)-(lipoyl)lysine from octanoyl-[acyl-carrier-protein]: step 2/2. Catalyzes the radical-mediated insertion of two sulfur atoms into the C-6 and C-8 positions of the octanoyl moiety bound to the lipoyl domains of lipoate-dependent enzymes, thereby converting the octanoylated domains into lipoylated derivatives. This Nematostella vectensis (Starlet sea anemone) protein is Lipoyl synthase, mitochondrial.